The primary structure comprises 153 residues: MKKSERQAVIEQLISEYPIATQEELMAKLKAEGIAATQATISRDIREMQIVKTPDEHGQTRYAIFKTTNKNEQDRLFETLHDVVTSIDRVEFMNIIHTLPSNGNLLAAIIDDLNLPEVSGTLAGHDTIFVVSPNTTVAKQLYESFASHISNED.

Belongs to the ArgR family.

The protein resides in the cytoplasm. It participates in amino-acid degradation; L-arginine degradation via ADI pathway. Regulates the transcription of the arc operon, involved in arginine catabolism. The polypeptide is Arginine regulator (argR1) (Lactiplantibacillus plantarum (strain ATCC BAA-793 / NCIMB 8826 / WCFS1) (Lactobacillus plantarum)).